The primary structure comprises 509 residues: Galactose-1-phosphate uridylyltransferase (509 aa).

The protein belongs to the galactose-1-phosphate uridylyltransferase type 2 family.

The protein resides in the cytoplasm. The enzyme catalyses alpha-D-galactose 1-phosphate + UDP-alpha-D-glucose = alpha-D-glucose 1-phosphate + UDP-alpha-D-galactose. Its pathway is carbohydrate metabolism; galactose metabolism. This Fusobacterium nucleatum subsp. nucleatum (strain ATCC 25586 / DSM 15643 / BCRC 10681 / CIP 101130 / JCM 8532 / KCTC 2640 / LMG 13131 / VPI 4355) protein is Galactose-1-phosphate uridylyltransferase.